Reading from the N-terminus, the 693-residue chain is Protein-glutamine gamma-glutamyltransferase E (693 aa).

Residue Tyr111 is modified to Phosphotyrosine. Position 112 is a phosphothreonine (Thr112). Ca(2+)-binding residues include Ala222, Asn225, Asn227, and Asp228. Residue Cys273 is part of the active site. Ca(2+)-binding residues include Asp302, Asp304, Asn306, Ser308, and Asp325. Residues His331 and Asp354 contribute to the active site. The Ca(2+) site is built by Asn394, Thr416, Glu444, and Glu449. The disordered stretch occupies residues 455–482 (KAMNKLKPNASFGATSSRGPQGEEKEPS).

Belongs to the transglutaminase superfamily. Transglutaminase family. Consists of two polypeptide chains, which are synthesized as a precursor form of a single polypeptide. Requires Ca(2+) as cofactor. Post-translationally, activated by proteolytic processing. In vitro activation is commonly achieved by cleavage with dispase, a neutral bacterial protease. Physiological activation may be catalyzed by CTSL and, to a lesser extent, by CTSS.

The protein localises to the cytoplasm. It catalyses the reaction L-glutaminyl-[protein] + L-lysyl-[protein] = [protein]-L-lysyl-N(6)-5-L-glutamyl-[protein] + NH4(+). In terms of biological role, catalyzes the calcium-dependent formation of isopeptide cross-links between glutamine and lysine residues in various proteins, as well as the conjugation of polyamines to proteins. Involved in the formation of the cornified envelope (CE), a specialized component consisting of covalent cross-links of proteins beneath the plasma membrane of terminally differentiated keratinocytes. Catalyzes small proline-rich proteins and LOR cross-linking to form small interchain oligomers, which are further cross-linked by TGM1 onto the growing CE scaffold. In hair follicles, involved in cross-linking structural proteins to hardening the inner root sheath. This Rattus norvegicus (Rat) protein is Protein-glutamine gamma-glutamyltransferase E (Tgm3).